The following is a 215-amino-acid chain: SAGA complex/transcription factor TFIID complex subunit Taf10 (215 aa).

Residues 1–77 (MSDINNNEPA…SRERHGSNYV (77 aa)) are disordered. A compositionally biased stretch (polar residues) spans 23–42 (GNNSMSVDEQPETSSTNLPT). The span at 58–73 (NNEDSPKSDDSRERHG) shows a compositional bias: basic and acidic residues. Residues 58-203 (NNEDSPKSDD…VDDLSAALNE (146 aa)) enclose the Histone-fold domain.

It belongs to the TAF10 family. Component of the 1.8 MDa SAGA (Spt-Ada-Gcn5 acetyltransferase) complex, which is composed of 19 subunits tra1, spt7, taf5, ngg1/ada3, sgf73, spt20, spt8, taf12, taf6, hfi1/ada1, ubp8, gcn5, ada2, spt3, sgf29, taf10, taf9, sgf11 and sus1. The SAGA complex is composed of 4 modules, namely the HAT (histone acetyltransferase) module (gcn5, ada2, ngg1/ada3 and sgf29), the DUB (deubiquitinating) module (ubp8, sgf11, sgf73 and sus1), the core or TAF (TBP-associated factor) module (taf5, taf6, taf9, taf10 and taf12), and the Tra1 or SPT (Suppressor of Ty) module (tra1, hfi1/ada1, spt3, spt7, spt8 and spt20). The Tra1/SPT module binds activators, the core module recruits TBP (TATA-binding protein), the HAT module contains the histone H3 acetyltransferase gcn5, and the DUB module comprises the histone H2B deubiquitinase ubp8. Component of the 1.2 MDa TFIID complex, which is composed of TATA-binding protein (TBP) and the 14 TBP-associated factors (TAFs). It comprises 1 copy of each taf1, taf2, taf3, taf7, taf8, taf11, taf13, 2 copies of each taf4, taf5, taf6, taf9, taf10, taf12, and 3 copies of taf14. In TFIID, taf10 heterodimerizes with taf3 and taf8.

It is found in the nucleus. Its function is as follows. Functions as a component of both the DNA-binding general transcription initiation factor complex TFIID and the transcription coactivator SAGA complex. Binding of TFIID to a promoter (with or without TATA element) is the initial step in pre-initiation complex (PIC) formation. TFIID plays a key role in the regulation of gene expression by RNA polymerase II through different activities such as transcription activator interaction, core promoter recognition and selectivity, TFIIA and TFIIB interaction, chromatin modification (histone acetylation by TAF1), facilitation of DNA opening and initiation of transcription. SAGA acts as a general cofactor required for essentially all RNA polymerase II transcription. At the promoters, SAGA is required for transcription pre-initiation complex (PIC) recruitment. It influences RNA polymerase II transcriptional activity through different activities such as TBP interaction (via core/TAF module) and promoter selectivity, interaction with transcription activators (via Tra1/SPT module), and chromatin modification through histone acetylation (via HAT module) and deubiquitination (via DUB module). SAGA preferentially acetylates histones H3 (to form H3K9ac, H3K14ac, H3K18ac and H3K23ac) and H2B and deubiquitinates histone H2B. SAGA interacts with DNA via upstream activating sequences (UASs). This chain is SAGA complex/transcription factor TFIID complex subunit Taf10, found in Schizosaccharomyces pombe (strain 972 / ATCC 24843) (Fission yeast).